Consider the following 420-residue polypeptide: Tyrosine--tRNA ligase (420 aa).

L-tyrosine is bound at residue Tyr36. The 'HIGH' region motif lies at 41-50 (PTADSMHIGH). 2 residues coordinate L-tyrosine: Tyr170 and Gln174. The 'KMSKS' region signature appears at 231 to 235 (KFGKS). Lys234 is a binding site for ATP. Positions 353 to 420 (TNIVDFIVEA…KKKYFMVKYK (68 aa)) constitute an S4 RNA-binding domain.

The protein belongs to the class-I aminoacyl-tRNA synthetase family. TyrS type 1 subfamily. Homodimer.

It is found in the cytoplasm. It carries out the reaction tRNA(Tyr) + L-tyrosine + ATP = L-tyrosyl-tRNA(Tyr) + AMP + diphosphate + H(+). Its function is as follows. Catalyzes the attachment of tyrosine to tRNA(Tyr) in a two-step reaction: tyrosine is first activated by ATP to form Tyr-AMP and then transferred to the acceptor end of tRNA(Tyr). The polypeptide is Tyrosine--tRNA ligase (Staphylococcus carnosus (strain TM300)).